We begin with the raw amino-acid sequence, 374 residues long: Pectate lyase 3 (374 aa).

The first 22 residues, 1–22 (MKYLLPSAAAGLLLLAAQPTMA), serve as a signal peptide directing secretion. Residues cysteine 93 and cysteine 176 are joined by a disulfide bond. Ca(2+) is bound by residues aspartate 150, aspartate 152, glutamate 187, and aspartate 191. The active site involves arginine 239. The cysteines at positions 350 and 373 are disulfide-linked.

The protein belongs to the polysaccharide lyase 1 family. PLADES subfamily. The cofactor is Ca(2+).

It is found in the secreted. It carries out the reaction Eliminative cleavage of (1-&gt;4)-alpha-D-galacturonan to give oligosaccharides with 4-deoxy-alpha-D-galact-4-enuronosyl groups at their non-reducing ends.. It functions in the pathway glycan metabolism; pectin degradation; 2-dehydro-3-deoxy-D-gluconate from pectin: step 2/5. Involved in maceration and soft-rotting of plant tissue. This is Pectate lyase 3 (pel3) from Pectobacterium carotovorum (Erwinia carotovora).